We begin with the raw amino-acid sequence, 462 residues long: C4-dicarboxylate transport transcriptional regulatory protein DctD (462 aa).

In terms of domain architecture, Response regulatory spans 12-126 (QVLLIDDDPH…ALLDSVRRAL (115 aa)). Aspartate 61 bears the 4-aspartylphosphate mark. The Sigma-54 factor interaction domain maps to 152-381 (LIGRSAGMQR…LQNAAERFAL (230 aa)). Residues 180–187 (GETGAGKE) and 243–252 (ANGGTLFLDE) contribute to the ATP site.

Phosphorylated by DctB.

Functionally, member of the two-component regulatory system DctB/DctD, which regulates C4-dicarboxylate transport via regulation of expression of the dctPQM operon and dctA. This chain is C4-dicarboxylate transport transcriptional regulatory protein DctD, found in Pseudomonas aeruginosa (strain ATCC 15692 / DSM 22644 / CIP 104116 / JCM 14847 / LMG 12228 / 1C / PRS 101 / PAO1).